The following is a 375-amino-acid chain: Glutamate 5-kinase (375 aa).

Lys-17 is a binding site for ATP. Residues Ser-58, Asp-145, and Asn-157 each contribute to the substrate site. ATP contacts are provided by residues 177 to 178 and 219 to 225; these read SD and TGGMVTK. Residues 281–359 enclose the PUA domain; sequence QGALTLDDGA…RELARELGPA (79 aa).

This sequence belongs to the glutamate 5-kinase family.

It localises to the cytoplasm. The catalysed reaction is L-glutamate + ATP = L-glutamyl 5-phosphate + ADP. The protein operates within amino-acid biosynthesis; L-proline biosynthesis; L-glutamate 5-semialdehyde from L-glutamate: step 1/2. Catalyzes the transfer of a phosphate group to glutamate to form L-glutamate 5-phosphate. This chain is Glutamate 5-kinase, found in Streptomyces avermitilis (strain ATCC 31267 / DSM 46492 / JCM 5070 / NBRC 14893 / NCIMB 12804 / NRRL 8165 / MA-4680).